The chain runs to 216 residues: MHGNGGQPAAGGSESALSREGQPGPSGAAQGQVISNERSPRRYSTRTINGVQATNKFTAVGNPSLQRDPDWYRWNYNHSIAVWLRECSRSHAKICNCGQFRKHWFQECAGLEDRSTQASLEEAILRPLRVQGKRAKRKLDYHYSQPTPNRKKVYKTVRWQDELADREADFTPSEEDGGTTSSDFDGDINFDIGGDSGIVDELLGRPFTTPAPVRIV.

The tract at residues 1-50 is disordered; that stretch reads MHGNGGQPAAGGSESALSREGQPGPSGAAQGQVISNERSPRRYSTRTING. Residues 21-32 show a composition bias toward low complexity; sequence GQPGPSGAAQGQ. Catalysis depends on cysteine 95, which acts as the Phosphocysteine intermediate. The tract at residues 165-187 is disordered; that stretch reads DREADFTPSEEDGGTTSSDFDGD. Positions 178-187 are enriched in low complexity; the sequence is GTTSSDFDGD.

Belongs to the gyrovirus protein VP2 family.

It carries out the reaction O-phospho-L-tyrosyl-[protein] + H2O = L-tyrosyl-[protein] + phosphate. The catalysed reaction is O-phospho-L-seryl-[protein] + H2O = L-seryl-[protein] + phosphate. It catalyses the reaction O-phospho-L-threonyl-[protein] + H2O = L-threonyl-[protein] + phosphate. Its function is as follows. May act as a scaffold protein in virion assembly. May also play a role in intracellular signaling during viral replication. The polypeptide is Dual specificity protein phosphatase VP2 (VP2) (Gallus gallus (Chicken)).